The chain runs to 141 residues: Nucleoside diphosphate kinase (141 aa).

Residues K11, F59, R87, T93, R104, and N114 each contribute to the ATP site. The active-site Pros-phosphohistidine intermediate is the H117.

Belongs to the NDK family. In terms of assembly, homotetramer. Requires Mg(2+) as cofactor.

It localises to the cytoplasm. It carries out the reaction a 2'-deoxyribonucleoside 5'-diphosphate + ATP = a 2'-deoxyribonucleoside 5'-triphosphate + ADP. The enzyme catalyses a ribonucleoside 5'-diphosphate + ATP = a ribonucleoside 5'-triphosphate + ADP. Major role in the synthesis of nucleoside triphosphates other than ATP. The ATP gamma phosphate is transferred to the NDP beta phosphate via a ping-pong mechanism, using a phosphorylated active-site intermediate. The polypeptide is Nucleoside diphosphate kinase (Nitrosomonas europaea (strain ATCC 19718 / CIP 103999 / KCTC 2705 / NBRC 14298)).